Reading from the N-terminus, the 630-residue chain is 1-deoxy-D-xylulose-5-phosphate synthase (630 aa).

Residues histidine 72 and 113–115 (GHS) each bind thiamine diphosphate. Aspartate 144 is a binding site for Mg(2+). Residues 145 to 146 (GA), asparagine 173, tyrosine 284, and glutamate 367 each bind thiamine diphosphate. Asparagine 173 is a Mg(2+) binding site.

Belongs to the transketolase family. DXPS subfamily. Homodimer. It depends on Mg(2+) as a cofactor. Requires thiamine diphosphate as cofactor.

The enzyme catalyses D-glyceraldehyde 3-phosphate + pyruvate + H(+) = 1-deoxy-D-xylulose 5-phosphate + CO2. It participates in metabolic intermediate biosynthesis; 1-deoxy-D-xylulose 5-phosphate biosynthesis; 1-deoxy-D-xylulose 5-phosphate from D-glyceraldehyde 3-phosphate and pyruvate: step 1/1. Functionally, catalyzes the acyloin condensation reaction between C atoms 2 and 3 of pyruvate and glyceraldehyde 3-phosphate to yield 1-deoxy-D-xylulose-5-phosphate (DXP). The polypeptide is 1-deoxy-D-xylulose-5-phosphate synthase (Bacillus cereus (strain AH187)).